The chain runs to 484 residues: Probable autolysin PH (484 aa).

Residues 5 to 148 (KNQAEKWFDN…YYDDPMYFIR (144 aa)) form the Peptidase C51 domain. In terms of domain architecture, MurNAc-LAA spans 181–363 (IMLVAGHGYN…YSKLIAGAIH (183 aa)). The 71-residue stretch at 402-472 (KETGYYTVAN…IATGEVDKAG (71 aa)) folds into the SH3b domain.

The catalysed reaction is Hydrolyzes the link between N-acetylmuramoyl residues and L-amino acid residues in certain cell-wall glycopeptides.. Its function is as follows. Has weak lytic activity toward S.aureus cells. Full-length protein has no activity, but fusion of the Peptidase C51 domain to the lysostaphin SH3 cell wall binding domain yields an active chimeric enzyme, suggesting that PH may be functional. The sequence is that of Probable autolysin PH from Staphylococcus aureus (strain NCTC 8325 / PS 47).